We begin with the raw amino-acid sequence, 368 residues long: N-acetylneuraminate epimerase (368 aa).

The first 19 residues, 1–19 (MNKTITALAIMMASFAANA), serve as a signal peptide directing secretion. 7 Kelch repeats span residues 40 to 84 (TVYI…AFID), 86 to 137 (NLYV…FVHN), 139 to 173 (KAYV…KINA), 174 to 219 (HYFD…VNKG), 222 to 265 (TWLI…VAGG), 287 to 336 (ENYQ…PWNN), and 338 to 367 (LLII…VTVQ). E228 acts as the Proton acceptor in catalysis.

It belongs to the NanM family. In terms of assembly, homodimer.

The protein localises to the periplasm. The enzyme catalyses N-acetyl-alpha-neuraminate = N-acetyl-beta-neuraminate. In terms of biological role, converts alpha-N-acetylneuranimic acid (Neu5Ac) to the beta-anomer, accelerating the equilibrium between the alpha- and beta-anomers. Probably facilitates sialidase-negative bacteria to compete successfully for limited amounts of extracellular Neu5Ac, which is likely taken up in the beta-anomer. In addition, the rapid removal of sialic acid from solution might be advantageous to the bacterium to damp down host responses. The polypeptide is N-acetylneuraminate epimerase (Escherichia coli O9:H4 (strain HS)).